A 386-amino-acid polypeptide reads, in one-letter code: Phosphoglycerate kinase (386 aa).

Residues 21–23 (DLN), arginine 36, 59–62 (HLGR), arginine 113, and arginine 146 contribute to the substrate site. ATP-binding positions include lysine 197, glutamate 314, and 340–343 (GGDT).

This sequence belongs to the phosphoglycerate kinase family. As to quaternary structure, monomer.

The protein resides in the cytoplasm. It carries out the reaction (2R)-3-phosphoglycerate + ATP = (2R)-3-phospho-glyceroyl phosphate + ADP. It functions in the pathway carbohydrate degradation; glycolysis; pyruvate from D-glyceraldehyde 3-phosphate: step 2/5. The protein is Phosphoglycerate kinase of Vibrio vulnificus (strain CMCP6).